The chain runs to 927 residues: Protein translocase subunit SecA (927 aa).

Residues Gln-86, 104 to 108 (GEGKT), and Asp-494 each bind ATP. The tract at residues 853–927 (YTAPDEDGTP…GSKAKRGKRR (75 aa)) is disordered. Residues 860 to 879 (GTPHAEVEAVDPGARERTSE) show a composition bias toward basic and acidic residues. A compositionally biased stretch (basic residues) spans 907-927 (RAKRRGASARSGSKAKRGKRR).

The protein belongs to the SecA family. As to quaternary structure, monomer and homodimer. Part of the essential Sec protein translocation apparatus which comprises SecA, SecYEG and auxiliary proteins SecDF. Other proteins may also be involved.

The protein localises to the cell membrane. Its subcellular location is the cytoplasm. The catalysed reaction is ATP + H2O + cellular proteinSide 1 = ADP + phosphate + cellular proteinSide 2.. Functionally, part of the Sec protein translocase complex. Interacts with the SecYEG preprotein conducting channel. Has a central role in coupling the hydrolysis of ATP to the transfer of proteins into and across the cell membrane, serving as an ATP-driven molecular motor driving the stepwise translocation of polypeptide chains across the membrane. The sequence is that of Protein translocase subunit SecA from Kocuria rhizophila (strain ATCC 9341 / DSM 348 / NBRC 103217 / DC2201).